The sequence spans 471 residues: ATP synthase subunit beta (471 aa).

153–160 (GGAGVGKT) contacts ATP.

The protein belongs to the ATPase alpha/beta chains family. F-type ATPases have 2 components, CF(1) - the catalytic core - and CF(0) - the membrane proton channel. CF(1) has five subunits: alpha(3), beta(3), gamma(1), delta(1), epsilon(1). CF(0) has four main subunits: a(1), b(1), b'(1) and c(9-12).

Its subcellular location is the cell membrane. The catalysed reaction is ATP + H2O + 4 H(+)(in) = ADP + phosphate + 5 H(+)(out). Functionally, produces ATP from ADP in the presence of a proton gradient across the membrane. The catalytic sites are hosted primarily by the beta subunits. This Chloroflexus aggregans (strain MD-66 / DSM 9485) protein is ATP synthase subunit beta.